A 2148-amino-acid polypeptide reads, in one-letter code: General transcription factor 3C polypeptide 1 (2148 aa).

The span at 473 to 487 (GEEAFLSDSESEEES) shows a compositional bias: acidic residues. Disordered stretches follow at residues 473–568 (GEEA…FDPH) and 587–609 (NPKE…KPHK). Basic residues predominate over residues 491–502 (GKRRGRGSRGHS). Residue K533 forms a Glycyl lysine isopeptide (Lys-Gly) (interchain with G-Cter in SUMO2) linkage. A Phosphoserine modification is found at S666. Disordered regions lie at residues 717-771 (STAN…EKMG) and 818-863 (TGEQ…SSWE). 2 stretches are compositionally biased toward basic and acidic residues: residues 759–770 (ESTRVKKTDEKM) and 825–835 (HSERKTGKQEP). Glycyl lysine isopeptide (Lys-Gly) (interchain with G-Cter in SUMO2) cross-links involve residues K769 and K832. Position 1062 is a phosphoserine (S1062). The segment covering 1186 to 1195 (EHFELDREPT) has biased composition (basic and acidic residues). Disordered stretches follow at residues 1186–1238 (EHFE…KKLR), 1597–1627 (KSLG…SVEV), 1823–1881 (KASG…LPAK), 1893–1928 (SPRP…ESVG), and 2127–2148 (PRPS…ATSR). A Phosphothreonine modification is found at T1195. The span at 1198-1214 (RNRKVRGGKSQKRKRLK) shows a compositional bias: basic residues. A compositionally biased stretch (basic and acidic residues) spans 1228 to 1238 (EHPEAKSKKLR). The segment covering 1605–1616 (LDDDDEEEDLDE) has biased composition (acidic residues). Phosphoserine occurs at positions 1624, 1853, and 1893. Residues 1903-1912 (EAQAQFAAPE) show a composition bias toward low complexity. The span at 2132–2148 (SCYQSSAQPSTGVATSR) shows a compositional bias: polar residues.

It belongs to the TFIIIC subunit 1 family. In terms of assembly, part of the TFIIIC subcomplex TFIIIC2, consisting of six subunits, GTF3C1, GTF3C2, GTF3C3, GTF3C4, GTF3C5 and GTF3C6. Interacts with IGHMBP2. Interacts with MAF1.

It localises to the nucleus. Functionally, required for RNA polymerase III-mediated transcription. Component of TFIIIC that initiates transcription complex assembly on tRNA and is required for transcription of 5S rRNA and other stable nuclear and cytoplasmic RNAs. Binds to the box B promoter element. The sequence is that of General transcription factor 3C polypeptide 1 (Gtf3c1) from Rattus norvegicus (Rat).